Reading from the N-terminus, the 857-residue chain is Protein translocase subunit SecA (857 aa).

ATP-binding positions include glutamine 88, 106–110 (GEGKT), and aspartate 496. Zn(2+) contacts are provided by cysteine 833, cysteine 835, cysteine 844, and cysteine 845.

The protein belongs to the SecA family. In terms of assembly, monomer and homodimer. Part of the essential Sec protein translocation apparatus which comprises SecA, SecYEG and auxiliary proteins SecDF-YajC and YidC. The cofactor is Zn(2+).

The protein resides in the cell inner membrane. The protein localises to the cytoplasm. The enzyme catalyses ATP + H2O + cellular proteinSide 1 = ADP + phosphate + cellular proteinSide 2.. In terms of biological role, part of the Sec protein translocase complex. Interacts with the SecYEG preprotein conducting channel. Has a central role in coupling the hydrolysis of ATP to the transfer of proteins into and across the cell membrane, serving as an ATP-driven molecular motor driving the stepwise translocation of polypeptide chains across the membrane. The chain is Protein translocase subunit SecA from Sulfurimonas denitrificans (strain ATCC 33889 / DSM 1251) (Thiomicrospira denitrificans (strain ATCC 33889 / DSM 1251)).